A 154-amino-acid polypeptide reads, in one-letter code: Lipoprotein signal peptidase (154 aa).

The next 4 helical transmembrane spans lie at 8–28 (AFFL…YWAL), 36–56 (IVVN…AFSF), 66–86 (WLFA…LLTK), and 88–108 (HHWL…GNLY). Residues D118 and D136 contribute to the active site. The helical transmembrane segment at 129-149 (WPVFNLADVAITLGVILMLIA) threads the bilayer.

This sequence belongs to the peptidase A8 family.

It is found in the cell inner membrane. The enzyme catalyses Release of signal peptides from bacterial membrane prolipoproteins. Hydrolyzes -Xaa-Yaa-Zaa-|-(S,diacylglyceryl)Cys-, in which Xaa is hydrophobic (preferably Leu), and Yaa (Ala or Ser) and Zaa (Gly or Ala) have small, neutral side chains.. It participates in protein modification; lipoprotein biosynthesis (signal peptide cleavage). This protein specifically catalyzes the removal of signal peptides from prolipoproteins. This chain is Lipoprotein signal peptidase, found in Dichelobacter nodosus (strain VCS1703A).